A 714-amino-acid polypeptide reads, in one-letter code: Palmitoyltransferase ZDHHC5 (714 aa).

Topologically, residues 1–13 are cytoplasmic; sequence MPAESAKRFKPSK. Residues 14 to 34 form a helical membrane-spanning segment; it reads YVPVSAAAIFLVGATTLFFAF. Topologically, residues 35 to 52 are extracellular; it reads TCPGLSLSVSPAVPVYNA. Residues 53 to 73 traverse the membrane as a helical segment; that stretch reads VVFLFVLANFSMATFMDPGVF. Over 74-148 the chain is Cytoplasmic; it reads PRAEEDEDKE…NCIGRRNYRY (75 aa). Tyr91 bears the Phosphotyrosine mark. Residues 104 to 154 form the DHHC domain; the sequence is KWCATCRFYRPPRCSHCSVCDNCVEEFDHHCPWVNNCIGRRNYRYFFLFLL. The active-site S-palmitoyl cysteine intermediate is the Cys134. Residues 149–169 form a helical membrane-spanning segment; that stretch reads FFLFLLSLTAHITGVFGFGLL. Over 170-191 the chain is Extracellular; that stretch reads YVLYHMEELSGVRTAVTMAVMC. A helical transmembrane segment spans residues 192–212; sequence VAGLFFIPVAGLTGFHVVLVA. Residues 213-714 are Cytoplasmic-facing; sequence RGRTTNEQVT…VGGTTYEISV (502 aa). Phosphoserine is present on Ser247. The segment at 289–714 is disordered; it reads GELRRTKSKG…VGGTTYEISV (426 aa). Thr294 bears the Phosphothreonine mark. Phosphoserine is present on residues Ser296 and Ser299. Thr303 carries the post-translational modification Phosphothreonine. The residue at position 345 (Ser345) is a Phosphoserine. Phosphothreonine occurs at positions 348 and 350. Residues 359–373 show a composition bias toward low complexity; it reads SSSSASAAMPHSSSA. Phosphoserine occurs at positions 380, 398, 406, and 409. Polar residues predominate over residues 388 to 398; the sequence is AESSRQPSYRS. Thr411 is subject to Phosphothreonine. A compositionally biased stretch (low complexity) spans 422 to 432; it reads SSGSRSSSLKS. Phosphoserine is present on residues Ser425, Ser429, and Ser432. Thr436 bears the Phosphothreonine mark. Polar residues predominate over residues 445–478; the sequence is SIRSEGTTSTSYKSLANQTRNGSLSYDSLLTPSD. Phosphoserine is present on residues Ser529 and Ser554. Arg616 bears the Omega-N-methylarginine mark. A Phosphoserine modification is found at Ser620. Phosphothreonine is present on Thr658. The span at 667 to 678 shows a compositional bias: polar residues; the sequence is TAYSKSNGQPKS. Residues 683 to 692 show a composition bias toward pro residues; the sequence is PPGPGQPPLS. Phosphoserine is present on Ser693. Arg696 carries the omega-N-methylarginine modification.

This sequence belongs to the DHHC palmitoyltransferase family. ERF2/ZDHHC9 subfamily. Phosphorylation regulates association with endocytic proteins and its subcellular localization. Phosphorylation by LYN during fatty acid uptake leads to inactivation of the activity. Post-translationally, autopalmitoylated. Palmitoylation of the C-terminal tail regulates stimulation-dependent plasma membrane motility.

The protein localises to the cell membrane. The catalysed reaction is L-cysteinyl-[protein] + hexadecanoyl-CoA = S-hexadecanoyl-L-cysteinyl-[protein] + CoA. Its function is as follows. Palmitoyltransferase that catalyzes the addition of palmitate onto various protein substrates such as CTNND2, CD36, GSDMD, NLRP3, NOD1, NOD2, STAT3 and S1PR1 thus plays a role in various biological processes including cell adhesion, inflammation, fatty acid uptake, bacterial sensing or cardiac functions. Plays an important role in the regulation of synapse efficacy by mediating palmitoylation of delta-catenin/CTNND2, thereby increasing synaptic delivery and surface stabilization of alpha-amino-3-hydroxy-5-methyl-4-isoxazole propionic acid receptors (AMPARs). Under basal conditions, remains at the synaptic membrane through FYN-mediated phosphorylation that prevents association with endocytic proteins. Neuronal activity enhances the internalization and trafficking of DHHC5 from spines to dendritic shafts where it palmitoylates delta-catenin/CTNND2. Regulates cell adhesion at the plasma membrane by palmitoylating GOLGA7B and DSG2. Plays a role in innate immune response by mediating the palmitoylation of NOD1 and NOD2 and their proper recruitment to the bacterial entry site and phagosomes. Also participates in fatty acid uptake by palmitoylating CD36 and thereby targeting it to the plasma membrane. Upon binding of fatty acids to CD36, gets phosphorylated by LYN leading to inactivation and subsequent CD36 caveolar endocytosis. Controls oligodendrocyte development by catalyzing STAT3 palmitoylation. Acts as a regulator of inflammatory response by mediating palmitoylation of NLRP3 and GSDMD. Palmitoylates NLRP3 to promote inflammasome assembly and activation. Activates pyroptosis by catalyzing palmitoylation of gasdermin-D (GSDMD), thereby promoting membrane translocation and pore formation of GSDMD. In Bos taurus (Bovine), this protein is Palmitoyltransferase ZDHHC5 (ZDHHC5).